A 242-amino-acid polypeptide reads, in one-letter code: uncharacterized protein (242 aa).

The protein localises to the cytoplasm. The protein resides in the nucleus. This is an uncharacterized protein from Schizosaccharomyces pombe (strain 972 / ATCC 24843) (Fission yeast).